The primary structure comprises 156 residues: Small ribosomal subunit protein uS7c (156 aa).

The protein belongs to the universal ribosomal protein uS7 family. In terms of assembly, part of the 30S ribosomal subunit.

The protein localises to the plastid. The protein resides in the chloroplast. One of the primary rRNA binding proteins, it binds directly to 16S rRNA where it nucleates assembly of the head domain of the 30S subunit. The chain is Small ribosomal subunit protein uS7c (rps7) from Rhodomonas salina (Cryptomonas salina).